A 167-amino-acid polypeptide reads, in one-letter code: Probable host range protein 2 (167 aa).

The protein belongs to the poxviridae C7 protein family.

Functionally, plays a role for multiplication of the virus in different cell types. The protein is Probable host range protein 2 of Yaba monkey tumor virus (strain VR587) (YMTV).